The primary structure comprises 311 residues: Cytosolic Fe-S cluster assembly factor Nubp1 homolog (311 aa).

The tract at residues 1–21 is disordered; the sequence is MQAPPPEHCPGVESEEAGKGS. Residues cysteine 9, cysteine 23, cysteine 26, and cysteine 32 each contribute to the [4Fe-4S] cluster site. An ATP-binding site is contributed by 63 to 70; that stretch reads GKGGVGKS. [4Fe-4S] cluster contacts are provided by cysteine 240 and cysteine 243.

This sequence belongs to the Mrp/NBP35 ATP-binding proteins family. NUBP1/NBP35 subfamily. Heterotetramer of 2 Nubp1 and 2 Nubp2 chains. The cofactor is [4Fe-4S] cluster.

It localises to the cytoplasm. Its function is as follows. Component of the cytosolic iron-sulfur (Fe/S) protein assembly (CIA) machinery. Required for maturation of extramitochondrial Fe-S proteins. The Nubp1-Nubp2 heterotetramer forms a Fe-S scaffold complex, mediating the de novo assembly of an Fe-S cluster and its transfer to target apoproteins. The sequence is that of Cytosolic Fe-S cluster assembly factor Nubp1 homolog from Drosophila melanogaster (Fruit fly).